The sequence spans 372 residues: UDP-N-acetylglucosamine--N-acetylmuramyl-(pentapeptide) pyrophosphoryl-undecaprenol N-acetylglucosamine transferase (372 aa).

UDP-N-acetyl-alpha-D-glucosamine-binding positions include 16 to 18 (TGG), N128, R164, S192, I250, and Q295.

This sequence belongs to the glycosyltransferase 28 family. MurG subfamily.

It is found in the cell inner membrane. The catalysed reaction is di-trans,octa-cis-undecaprenyl diphospho-N-acetyl-alpha-D-muramoyl-L-alanyl-D-glutamyl-meso-2,6-diaminopimeloyl-D-alanyl-D-alanine + UDP-N-acetyl-alpha-D-glucosamine = di-trans,octa-cis-undecaprenyl diphospho-[N-acetyl-alpha-D-glucosaminyl-(1-&gt;4)]-N-acetyl-alpha-D-muramoyl-L-alanyl-D-glutamyl-meso-2,6-diaminopimeloyl-D-alanyl-D-alanine + UDP + H(+). Its pathway is cell wall biogenesis; peptidoglycan biosynthesis. Its function is as follows. Cell wall formation. Catalyzes the transfer of a GlcNAc subunit on undecaprenyl-pyrophosphoryl-MurNAc-pentapeptide (lipid intermediate I) to form undecaprenyl-pyrophosphoryl-MurNAc-(pentapeptide)GlcNAc (lipid intermediate II). The chain is UDP-N-acetylglucosamine--N-acetylmuramyl-(pentapeptide) pyrophosphoryl-undecaprenol N-acetylglucosamine transferase from Paraburkholderia xenovorans (strain LB400).